The sequence spans 276 residues: Elongation factor Ts (276 aa).

Positions 79 to 82 are involved in Mg(2+) ion dislocation from EF-Tu; the sequence is TDFV.

This sequence belongs to the EF-Ts family.

The protein localises to the cytoplasm. Functionally, associates with the EF-Tu.GDP complex and induces the exchange of GDP to GTP. It remains bound to the aminoacyl-tRNA.EF-Tu.GTP complex up to the GTP hydrolysis stage on the ribosome. This is Elongation factor Ts from Buchnera aphidicola subsp. Cinara cedri (strain Cc).